A 323-amino-acid chain; its full sequence is Cell division protein ZipA (323 aa).

The Periplasmic segment spans residues 1–4 (MDLN). A helical membrane pass occupies residues 5–25 (TILIILGIIALIILVVHGLWA). Over 26-323 (NRREKSQYFK…AEKAYLDKVR (298 aa)) the chain is Cytoplasmic. The tract at residues 44–73 (SRLREPPAHIQSASEEKKDANTSTPTAEVS) is disordered.

The protein belongs to the ZipA family. In terms of assembly, interacts with FtsZ via their C-terminal domains.

The protein resides in the cell inner membrane. Functionally, essential cell division protein that stabilizes the FtsZ protofilaments by cross-linking them and that serves as a cytoplasmic membrane anchor for the Z ring. Also required for the recruitment to the septal ring of downstream cell division proteins. This is Cell division protein ZipA from Pasteurella multocida (strain Pm70).